Consider the following 457-residue polypeptide: F-box only protein 13 (457 aa).

One can recognise an F-box domain in the interval 64-110 (EFPMDDLNDDVLERVLSWLPTSCFFRMSSVCKRWKSSQTSKSFKLAC).

The polypeptide is F-box only protein 13 (FBX13) (Arabidopsis thaliana (Mouse-ear cress)).